The primary structure comprises 321 residues: MASSQGKNELKFADWMATLPESIHSIPLTNLAIPGSHDSFSFYIDEASPVGPEQPETVQNFVSVFGTVAKKLMRKWLATQTMNFTGQLGAGIRYFDLRISTKPRDPDNELYFAHGLFSAKVNEGLEEINAFLTDHHKELVFLDFNHFYGMQKYHHEKLVQMLKDIYGNKMCPAIFAQEVSLKYLWEKDYQVLVFYHSPVALEVPFLWPGQMMPAPWANTTDPEKLIQFLQASITERRKKGSFFISQVVLTPKASTVVKGVASGLRETITERALPAMMQWVRTQKPGESGINIVTADFVELGDFISTVIKLNYVFEEGEANT.

The PI-PLC X-box domain occupies 22 to 197 (SIHSIPLTNL…DYQVLVFYHS (176 aa)). Residues His37 and His114 contribute to the active site.

The polypeptide is PI-PLC X domain-containing protein 3 (PLCXD3) (Bos taurus (Bovine)).